The primary structure comprises 274 residues: 2,3,4,5-tetrahydropyridine-2,6-dicarboxylate N-succinyltransferase (274 aa).

The protein belongs to the transferase hexapeptide repeat family.

Its subcellular location is the cytoplasm. It catalyses the reaction (S)-2,3,4,5-tetrahydrodipicolinate + succinyl-CoA + H2O = (S)-2-succinylamino-6-oxoheptanedioate + CoA. It functions in the pathway amino-acid biosynthesis; L-lysine biosynthesis via DAP pathway; LL-2,6-diaminopimelate from (S)-tetrahydrodipicolinate (succinylase route): step 1/3. The polypeptide is 2,3,4,5-tetrahydropyridine-2,6-dicarboxylate N-succinyltransferase (Escherichia coli (strain SMS-3-5 / SECEC)).